The chain runs to 70 residues: Small, acid-soluble spore protein 1 (70 aa).

The protein belongs to the alpha/beta-type SASP family.

Its function is as follows. SASP are bound to spore DNA. They are double-stranded DNA-binding proteins that cause DNA to change to an a-like conformation. They protect the DNA backbone from chemical and enzymatic cleavage and are thus involved in dormant spore's high resistance to UV light. The polypeptide is Small, acid-soluble spore protein 1 (Bacillus subtilis).